Here is a 246-residue protein sequence, read N- to C-terminus: UDP-N-acetyl-D-mannosaminuronic acid transferase (246 aa).

It belongs to the glycosyltransferase 26 family.

It carries out the reaction UDP-N-acetyl-alpha-D-mannosaminouronate + N-acetyl-alpha-D-glucosaminyl-di-trans,octa-cis-undecaprenyl diphosphate = beta-D-ManNAcA-(1-&gt;4)-alpha-D-GlcNAc-di-trans,octa-cis-undecaprenyl diphosphate + UDP + H(+). Its pathway is bacterial outer membrane biogenesis; enterobacterial common antigen biosynthesis. In terms of biological role, catalyzes the synthesis of Und-PP-GlcNAc-ManNAcA (Lipid II), the second lipid-linked intermediate involved in enterobacterial common antigen (ECA) synthesis. The protein is UDP-N-acetyl-D-mannosaminuronic acid transferase of Escherichia coli (strain ATCC 8739 / DSM 1576 / NBRC 3972 / NCIMB 8545 / WDCM 00012 / Crooks).